Here is a 245-residue protein sequence, read N- to C-terminus: Caffeoyl-CoA O-methyltransferase (245 aa).

K19 contacts substrate. S-adenosyl-L-methionine contacts are provided by residues T61, E83, 85-86 (GV), S91, D109, and A138. Residue D161 participates in substrate binding. D161 serves as a coordination point for a divalent metal cation. D163 contributes to the S-adenosyl-L-methionine binding site. Residues D187 and N188 each contribute to the a divalent metal cation site. N192 serves as a coordination point for substrate.

Belongs to the class I-like SAM-binding methyltransferase superfamily. Cation-dependent O-methyltransferase family. CCoAMT subfamily. A divalent metal cation is required as a cofactor.

It carries out the reaction (E)-caffeoyl-CoA + S-adenosyl-L-methionine = (E)-feruloyl-CoA + S-adenosyl-L-homocysteine + H(+). The protein operates within aromatic compound metabolism; phenylpropanoid biosynthesis. Its function is as follows. Methylates caffeoyl-CoA to feruloyl-CoA and 5-hydroxyferuloyl-CoA to sinapoyl-CoA. Plays a role in the synthesis of feruloylated polysaccharides. Involved in the reinforcement of the plant cell wall. Also involved in the responding to wounding or pathogen challenge by the increased formation of cell wall-bound ferulic acid polymers. In Zinnia elegans (Garden zinnia), this protein is Caffeoyl-CoA O-methyltransferase (CCOAOMT).